The primary structure comprises 521 residues: U4/U6 small nuclear ribonucleoprotein Prp4 (521 aa).

Lys26 carries the N6-acetyllysine modification. 7 WD repeats span residues 228 to 267, 270 to 317, 320 to 359, 362 to 401, 404 to 443, 446 to 486, and 489 to 521; these read GDDR…LLHT, GHNT…PVAD, GHTV…EILH, GHSM…CIMF, GHLK…CVYT, AHQN…PLKT, and GHEG…WMAE.

As to quaternary structure, component of the precatalytic spliceosome (spliceosome B complex). Component of the U4/U6-U5 tri-snRNP complex, a building block of the precatalytic spliceosome (spliceosome B complex). The U4/U6-U5 tri-snRNP complex is composed of the U4, U6 and U5 snRNAs and at least PRPF3, PRPF4, PRPF6, PRPF8, PRPF31, SNRNP200, TXNL4A, SNRNP40, SNRPB, SNRPD1, SNRPD2, SNRPD3, SNRPE, SNRPF, SNRPG, DDX23, CD2BP2, PPIH, SNU13, EFTUD2, SART1 and USP39, plus LSM2, LSM3, LSM4, LSM5, LSM6, LSM7 and LSM8. Interacts directly with PRPF18, PPIH and PRPF3. Part of a heteromeric complex containing PPIH, PRPF3 and PRPF4 that is stable in the absence of RNA. Interacts with ERCC6.

The protein resides in the nucleus. Its subcellular location is the nucleus speckle. In terms of biological role, plays a role in pre-mRNA splicing as component of the U4/U6-U5 tri-snRNP complex that is involved in spliceosome assembly, and as component of the precatalytic spliceosome (spliceosome B complex). The protein is U4/U6 small nuclear ribonucleoprotein Prp4 (Prpf4) of Mus musculus (Mouse).